The primary structure comprises 142 residues: Transcriptional regulator MraZ (142 aa).

2 SpoVT-AbrB domains span residues 5 to 51 and 77 to 120; these read ASAL…PRPE and AMDV…DSQT.

The protein belongs to the MraZ family. Forms oligomers.

It is found in the cytoplasm. The protein localises to the nucleoid. This chain is Transcriptional regulator MraZ, found in Burkholderia cenocepacia (strain HI2424).